A 253-amino-acid polypeptide reads, in one-letter code: MSKNIKTPTNQKVLTNVAVVRMKKTGKRFEIACYKNKVVNWRNKSEKDIDEVLQTHTVFSNVSKGQLSKKEELIAAFGIEDQLEICKIILDKGDLQVSEKERQAASDQSLKEVSQLIASMVVNPETKRPVPPSVIDKALQEMHFSLKPNRSSKQQALDAIPKLRETLKIERAKMKIRVAIPTKEAKSVHTKLKTLFSDVEVDDWQDGSLEMVGLIEPGSFRALDDLVRNETKGHGRLEILSLKDVVEGELQIS.

This sequence belongs to the SDO1/SBDS family. In terms of assembly, associates with the 60S ribosomal subunit.

Its subcellular location is the cytoplasm. It localises to the nucleus. The protein resides in the nucleolus. It is found in the nucleoplasm. The protein localises to the cytoskeleton. Its subcellular location is the spindle. Required for the assembly of mature ribosomes and ribosome biogenesis. Together with K10C3.5b/EFL1, triggers the GTP-dependent release of ribosome maturation factors from 60S pre-ribosomes in the cytoplasm, thereby activating ribosomes for translation competence by allowing 80S ribosome assembly. Required for normal levels of protein synthesis. May play a role in cellular stress resistance. May play a role in cellular response to DNA damage. May play a role in cell proliferation. The polypeptide is Ribosome maturation protein SBDS (sbds-1) (Caenorhabditis elegans).